The following is a 793-amino-acid chain: Methionine--tRNA ligase (793 aa).

A 'HIGH' region motif is present at residues 11-21 (PYVNNFPHLGN). The Zn(2+) site is built by Cys142, Cys145, Cys155, and Cys158. The 'KMSKS' region motif lies at 334–338 (KFSKS). An ATP-binding site is contributed by Lys337. Residues 581–590 (SQKDRKKSEK) show a composition bias toward basic and acidic residues. A disordered region spans residues 581-610 (SQKDRKKSEKGCSACKDSGSSKSDAAASSA). Low complexity predominate over residues 591–610 (GCSACKDSGSSKSDAAASSA). In terms of domain architecture, tRNA-binding spans 622 to 727 (FSKKIALKTA…PWAAPGTPVI (106 aa)).

Belongs to the class-I aminoacyl-tRNA synthetase family. MetG type 1 subfamily. As to quaternary structure, homodimer. Requires Zn(2+) as cofactor.

Its subcellular location is the cytoplasm. The catalysed reaction is tRNA(Met) + L-methionine + ATP = L-methionyl-tRNA(Met) + AMP + diphosphate. In terms of biological role, is required not only for elongation of protein synthesis but also for the initiation of all mRNA translation through initiator tRNA(fMet) aminoacylation. The protein is Methionine--tRNA ligase of Treponema denticola (strain ATCC 35405 / DSM 14222 / CIP 103919 / JCM 8153 / KCTC 15104).